The sequence spans 280 residues: uncharacterized protein (280 aa).

NADP(+) is bound at residue 3–29 (KKIAIVTGASSGFGLLAAVKLARSFFV). Residue serine 139 coordinates substrate. Tyrosine 152 functions as the Proton acceptor in the catalytic mechanism.

This sequence belongs to the short-chain dehydrogenases/reductases (SDR) family.

This is an uncharacterized protein from Bacillus subtilis (strain 168).